Consider the following 358-residue polypeptide: MPSSVIMFTFLALTVLTAVMVGTSEAVSCMDNKNKPVDWFIVYKLPQDSASSKPVIREGYGQMYMDVNNQALKFSSTSLKDDDHAIAYTVDDIYKNHGKGNLAHVMYNDQPPAGEEIQSGLVGHTKGVLAFDGTSGFWLVHSVPKFPLPASKSYNWPDNAKRNGQTLLCITFKYDQFEKIGQQLKYNYPGVYDSDLPSKLVGKTPSIVDLVKNVHVTSPPWNRQLNLQSKSGQTFVSFNKASKWGEDLYKNWLATHFKSGLYCETWQNGGRNLNSSCEAGLNVYNVKKVSLSGGSDFKGTKDHSKWAVTTKSGLKWTCIGGINRQTSQMYRGGGAVCLENANVHKAFYDSVAEYEPCT.

A signal peptide spans 1–26 (MPSSVIMFTFLALTVLTAVMVGTSEA). N-linked (GlcNAc...) asparagine glycosylation occurs at asparagine 274. Histidine 303 is a catalytic residue.

Belongs to the DNase II family. In terms of assembly, plancitoxin is a heterodimer of alpha and beta subunits; disulfide-linked by a single disulfide bond. As to expression, venom gland.

The protein resides in the secreted. The catalysed reaction is Endonucleolytic cleavage to nucleoside 3'-phosphates and 3'-phosphooligonucleotide end-products.. Its function is as follows. Hydrolyzes DNA with an optimum pH of 7.2. Is potently hepatotoxic. It induces caspase-independent apoptosis (on rat liver cells) through the following procedure: binding to a specific receptor in the cytoplasmic membrane, entering the cell, entering the nucleus and degrading DNA. The polypeptide is Plancitoxin-1 (Acanthaster planci (Crown-of-thorns starfish)).